The chain runs to 947 residues: Mitogen-activated protein kinase kinase kinase 14 (947 aa).

Disordered regions lie at residues Met1–Ser37 and Lys135–Gln171. Over residues Lys135–Ser151 the composition is skewed to basic residues. The Protein kinase domain occupies Ala400 to Leu655. The tract at residues Thr401 to Arg653 is interaction with ZFP91. ATP is bound by residues Leu406–Val414 and Lys429. Residue Asp515 is the Proton acceptor of the active site. The residue at position 559 (Thr559) is a Phosphothreonine. Disordered stretches follow at residues Lys662–Pro766 and Leu805–Ser830. The segment covering Trp665 to His674 has biased composition (basic and acidic residues). Positions Leu713–Ser727 are enriched in pro residues. The segment covering Glu741–Pro752 has biased composition (low complexity). Residues Ser814–His829 are compositionally biased toward polar residues.

The protein belongs to the protein kinase superfamily. STE Ser/Thr protein kinase family. MAP kinase kinase kinase subfamily. Interacts with TRAF2, TRAF5, TRAF6, IKKA and NFKB2/P100. Interacts with TRAF3 and PELI3. Interacts with NIBP; the interaction is direct. Interacts with ARRB1 and ARRB2. Interacts with GRB10. Interacts with ZFP91. Interacts with NLRP12; this interaction promotes proteasomal degradation of MAP3K14. Directly interacts with DDX3X. Interacts (via C-terminus and kinase domain) with PPPC3A (via N-terminus) and PPP3CB. Autophosphorylated. Phosphorylation at Thr-559 is required to activate its kinase activity and 'Lys-63'-linked polyubiquitination. Phosphorylated by CHUK/IKKA leading to MAP3K14 destabilization. Post-translationally, ubiquitinated. Undergoes both 'Lys-48'- and 'Lys-63'-linked polyubiquitination. 'Lys-48'-linked polyubiquitination leads to its degradation by the proteasome, while 'Lys-63'-linked polyubiquitination stabilizes and activates it. In terms of tissue distribution, weakly expressed in testis, small intestine, spleen, thymus, peripheral blood leukocytes, prostate, ovary and colon.

Its subcellular location is the cytoplasm. The enzyme catalyses L-seryl-[protein] + ATP = O-phospho-L-seryl-[protein] + ADP + H(+). It catalyses the reaction L-threonyl-[protein] + ATP = O-phospho-L-threonyl-[protein] + ADP + H(+). Its function is as follows. Lymphotoxin beta-activated kinase which seems to be exclusively involved in the activation of NF-kappa-B and its transcriptional activity. Phosphorylates CHUK/IKKA, thereby promoting proteolytic processing of NFKB2/P100, which leads to NF-kappa-B activation via the non-canonical pathway. Has an essential role in the non-canonical NF-kappa-B signaling that regulates genes encoding molecules involved in B-cell survival, lymphoid organogenesis, and immune response. Could act in a receptor-selective manner. This is Mitogen-activated protein kinase kinase kinase 14 from Homo sapiens (Human).